A 140-amino-acid polypeptide reads, in one-letter code: Small ribosomal subunit protein eS17y (140 aa).

It belongs to the eukaryotic ribosomal protein eS17 family.

This is Small ribosomal subunit protein eS17y (RPS17B) from Arabidopsis thaliana (Mouse-ear cress).